A 183-amino-acid chain; its full sequence is Ribosome rescue factor SmrB (183 aa).

The Smr domain occupies 98 to 173 (LDLHGLTQLQ…GDAALLVLIE (76 aa)).

This sequence belongs to the SmrB family. As to quaternary structure, associates with collided ribosomes, but not with correctly translating polysomes.

Its function is as follows. Acts as a ribosome collision sensor. Detects stalled/collided disomes (pairs of ribosomes where the leading ribosome is stalled and a second ribosome has collided with it) and endonucleolytically cleaves mRNA at the 5' boundary of the stalled ribosome. Stalled/collided disomes form a new interface (primarily via the 30S subunits) that binds SmrB. Cleaved mRNA becomes available for tmRNA ligation, leading to ribosomal subunit dissociation and rescue of stalled ribosomes. This chain is Ribosome rescue factor SmrB, found in Salmonella arizonae (strain ATCC BAA-731 / CDC346-86 / RSK2980).